The sequence spans 680 residues: Enzymatic polyprotein (680 aa).

Residues 41–131 are protease; it reads LHCFVDTGAS…LYEPFIQFTD (91 aa). Aspartate 46 is an active-site residue. The Reverse transcriptase domain maps to 273-453; sequence LKVIKPSKSP…KKINFLGLEI (181 aa).

The protein belongs to the caulimoviridae enzymatic polyprotein family.

It carries out the reaction DNA(n) + a 2'-deoxyribonucleoside 5'-triphosphate = DNA(n+1) + diphosphate. Its function is as follows. Encodes for at least two polypeptides: protease (PR) and reverse transcriptase (RT). The protease processes the polyprotein in cis. Reverse transcriptase is multifunctional enzyme that converts the viral RNA genome into dsDNA in viral cytoplasmic capsids. This enzyme displays a DNA polymerase activity that can copy either DNA or RNA templates, and a ribonuclease H (RNase H) activity that cleaves the RNA strand of RNA-DNA heteroduplexes in a partially processive 3'- to 5'-endonucleasic mode. Neo-synthesized pregenomic RNA (pgRNA) are encapsidated, and reverse-transcribed inside the nucleocapsid. Partial (+)DNA is synthesized from the (-)DNA template and generates the relaxed circular DNA (RC-DNA) genome. After budding and infection, the RC-DNA migrates in the nucleus, and is converted into a plasmid-like covalently closed circular DNA (cccDNA). This chain is Enzymatic polyprotein, found in Cauliflower mosaic virus (strain NY8153) (CaMV).